The chain runs to 478 residues: Transcript termination protein A18 (478 aa).

In terms of domain architecture, Helicase ATP-binding spans Lys98 to Ser254. An ATP-binding site is contributed by Leu111–Thr118. Positions Asp204 to His207 match the DESH box motif. The Helicase C-terminal domain occupies Pro302–Val468.

The protein belongs to the helicase family. Poxviruses subfamily. Interacts with G2. Might be part of a transcription complex composed at least of G2, A18, and H5.

The protein resides in the virion. In terms of biological role, DNA helicase which seems to act as a postreplicative transcription termination factor. Involved in ATP-dependent release of nascent RNA. Forms a stable complex with single-stranded DNA, and to a lesser extent RNA. In Rabbit fibroma virus (strain Kasza) (RFV), this protein is Transcript termination protein A18.